The primary structure comprises 368 residues: MSRNIIPKTTYQEIMLSGHPMIDVRAPIEFDKGAFPSSSNFPLMQDSERQRVGTCYKEQGQDAAIALGHSLVNGKVKQQRVDAWLAFIKQHPDAYLYCFRGGLRSQLSQQWIKEAGVDIPYVEGGYKAMRQYLIEVIDNAPAKQPVFILSGITGSGKTDFLLQRSEAVDLEGYAHHRGSSFGRYHEGQPTQINFENQLAVALLKHQERKEQCLLVEDESFLIGRSAIPKAFYEGMQNADILVLEEPEETRLTRLLNEYVHKMHSGYVERLGEEAGFTAFSEYLSQSITSIKKRLGSQLHDEFQTIISKALNMQLQQNDTQGHLEWISLLLTRYYDPMYQYQLEQKQERVIFKGSHQAMHEWLDHYRNR.

The Rhodanese domain occupies 15 to 138 (MLSGHPMIDV…MRQYLIEVID (124 aa)). Cys98 acts as the S-selanylcysteine intermediate in catalysis.

The protein belongs to the SelU family. As to quaternary structure, monomer.

It catalyses the reaction 5-methylaminomethyl-2-thiouridine(34) in tRNA + selenophosphate + (2E)-geranyl diphosphate + H2O + H(+) = 5-methylaminomethyl-2-selenouridine(34) in tRNA + (2E)-thiogeraniol + phosphate + diphosphate. It carries out the reaction 5-methylaminomethyl-2-thiouridine(34) in tRNA + (2E)-geranyl diphosphate = 5-methylaminomethyl-S-(2E)-geranyl-thiouridine(34) in tRNA + diphosphate. The catalysed reaction is 5-methylaminomethyl-S-(2E)-geranyl-thiouridine(34) in tRNA + selenophosphate + H(+) = 5-methylaminomethyl-2-(Se-phospho)selenouridine(34) in tRNA + (2E)-thiogeraniol. The enzyme catalyses 5-methylaminomethyl-2-(Se-phospho)selenouridine(34) in tRNA + H2O = 5-methylaminomethyl-2-selenouridine(34) in tRNA + phosphate. Involved in the post-transcriptional modification of the uridine at the wobble position (U34) of tRNA(Lys), tRNA(Glu) and tRNA(Gln). Catalyzes the conversion of 2-thiouridine (S2U-RNA) to 2-selenouridine (Se2U-RNA). Acts in a two-step process involving geranylation of 2-thiouridine (S2U) to S-geranyl-2-thiouridine (geS2U) and subsequent selenation of the latter derivative to 2-selenouridine (Se2U) in the tRNA chain. The protein is tRNA 2-selenouridine synthase of Shewanella woodyi (strain ATCC 51908 / MS32).